The sequence spans 160 residues: SsrA-binding protein (160 aa).

The protein belongs to the SmpB family.

The protein resides in the cytoplasm. Functionally, required for rescue of stalled ribosomes mediated by trans-translation. Binds to transfer-messenger RNA (tmRNA), required for stable association of tmRNA with ribosomes. tmRNA and SmpB together mimic tRNA shape, replacing the anticodon stem-loop with SmpB. tmRNA is encoded by the ssrA gene; the 2 termini fold to resemble tRNA(Ala) and it encodes a 'tag peptide', a short internal open reading frame. During trans-translation Ala-aminoacylated tmRNA acts like a tRNA, entering the A-site of stalled ribosomes, displacing the stalled mRNA. The ribosome then switches to translate the ORF on the tmRNA; the nascent peptide is terminated with the 'tag peptide' encoded by the tmRNA and targeted for degradation. The ribosome is freed to recommence translation, which seems to be the essential function of trans-translation. The sequence is that of SsrA-binding protein from Salmonella arizonae (strain ATCC BAA-731 / CDC346-86 / RSK2980).